Reading from the N-terminus, the 301-residue chain is Aquaporin-10 (301 aa).

The Cytoplasmic portion of the chain corresponds to methionine 1–arginine 22. Residues glutamine 23–alanine 41 form a helical membrane-spanning segment. At valine 42–phenylalanine 55 the chain is on the extracellular side. A helical transmembrane segment spans residues phenylalanine 56–asparagine 75. Residues valine 76–serine 77 lie on the Cytoplasmic side of the membrane. Positions glycine 78–cysteine 90 form an intramembrane region, discontinuously helical. An NPA 1 motif is present at residues asparagine 82–alanine 84. Over isoleucine 91 to proline 96 the chain is Cytoplasmic. Residues tryptophan 97 to leucine 121 traverse the membrane as a helical segment. Over tyrosine 122 to asparagine 158 the chain is Extracellular. 2 N-linked (GlcNAc...) asparagine glycosylation sites follow: asparagine 128 and asparagine 133. Residues glycine 159 to alanine 176 form a helical membrane-spanning segment. Residues isoleucine 177–glycine 188 lie on the Cytoplasmic side of the membrane. A helical transmembrane segment spans residues leucine 189–methionine 205. Topologically, residues glycine 206–asparagine 208 are extracellular. The segment at residues cysteine 209–leucine 223 is an intramembrane region (discontinuously helical). The NPA 2 motif lies at asparagine 214–alanine 216. Over phenylalanine 224–tryptophan 241 the chain is Extracellular. Residues tryptophan 242 to leucine 262 traverse the membrane as a helical segment. Residues leucine 263–leucine 301 are Cytoplasmic-facing.

It belongs to the MIP/aquaporin (TC 1.A.8) family. Homotetramer; each monomer provides an independent glycerol/water pore. N-glycosylation at Asn-133 increases the stability of the protein but has no effect on its activity. As to expression, detected in epithelial cells on villi in the ileum, and also in stomach, jejunum, colon, rectum, white adipose tissue and placenta (at protein level). Expressed in duodenum and jejunum. Highest expression in absorptive epithelial cells at the tips of villi in the jejunum. Detected in subcutaneous adipose tissue.

The protein resides in the apical cell membrane. It is found in the cell membrane. Its subcellular location is the lipid droplet. The enzyme catalyses glycerol(in) = glycerol(out). The catalysed reaction is H2O(in) = H2O(out). It catalyses the reaction urea(in) = urea(out). With respect to regulation, glycerol transport is regulated by pH, with the porin being permeable to glycerol at pH 5.5 but not at pH 7.4. Water permeability, however, is not influenced by pH. Functionally, aquaglyceroporins form homotetrameric transmembrane channels, with each monomer independently mediating glycerol and water transport across the plasma membrane along their osmotic gradient. Could also be permeable to urea. Among aquaglyceroporins, it exhibits a unique pH-gated glycerol transport activity, being more active at acidic pH. It most likely plays a central role in the efflux of glycerol formed during triglyceride hydrolysis in adipocytes and in glycerol uptake by enterocytes, as both processes occur and are stimulated at acidic pH. This is Aquaporin-10 from Homo sapiens (Human).